The following is a 305-amino-acid chain: Sulfate adenylyltransferase subunit 2 (305 aa).

Belongs to the PAPS reductase family. CysD subfamily. In terms of assembly, heterodimer composed of CysD, the smaller subunit, and CysN.

The catalysed reaction is sulfate + ATP + H(+) = adenosine 5'-phosphosulfate + diphosphate. Its pathway is sulfur metabolism; hydrogen sulfide biosynthesis; sulfite from sulfate: step 1/3. Its function is as follows. With CysN forms the ATP sulfurylase (ATPS) that catalyzes the adenylation of sulfate producing adenosine 5'-phosphosulfate (APS) and diphosphate, the first enzymatic step in sulfur assimilation pathway. APS synthesis involves the formation of a high-energy phosphoric-sulfuric acid anhydride bond driven by GTP hydrolysis by CysN coupled to ATP hydrolysis by CysD. The polypeptide is Sulfate adenylyltransferase subunit 2 (Pseudomonas fluorescens (strain ATCC BAA-477 / NRRL B-23932 / Pf-5)).